Here is a 393-residue protein sequence, read N- to C-terminus: G protein-activated inward rectifier potassium channel 3 (393 aa).

Residues Met1 to Arg23 are disordered. The Cytoplasmic portion of the chain corresponds to Met1 to Trp57. Residues Arg58–Ile82 traverse the membrane as a helical segment. The Extracellular segment spans residues Ala83–Gly106. Residues Phe107–Glu118 constitute an intramembrane region (helical; Pore-forming). Positions Thr119–His125 form an intramembrane region, pore-forming. Residues Thr120–His125 carry the Selectivity filter motif. Over Arg126–Glu134 the chain is Extracellular. The chain crosses the membrane as a helical span at residues Gly135–Cys156. Residues Met157–Val393 lie on the Cytoplasmic side of the membrane. A disordered region spans residues Lys360 to Val393. Residues Leu384–Val393 are compositionally biased toward pro residues. The PDZ-binding signature appears at Glu390–Val393.

This sequence belongs to the inward rectifier-type potassium channel (TC 1.A.2.1) family. KCNJ9 subfamily. As to quaternary structure, associates with KCNJ3/GIRK1 to form a G-protein-activated heteromultimer pore-forming unit. Interacts (via PDZ-binding motif) with SNX27 (via PDZ domain); the interaction is required when endocytosed to prevent degradation in lysosomes and promote recycling to the plasma membrane.

It is found in the membrane. The enzyme catalyses K(+)(in) = K(+)(out). Its function is as follows. This receptor is controlled by G proteins. Inward rectifier potassium channels are characterized by a greater tendency to allow potassium to flow into the cell rather than out of it. Their voltage dependence is regulated by the concentration of extracellular potassium; as external potassium is raised, the voltage range of the channel opening shifts to more positive voltages. The inward rectification is mainly due to the blockage of outward current by internal magnesium. Unable to produce channel activity when expressed alone but forms a functional channel in association with KCNJ3/GIRK1. In Rattus norvegicus (Rat), this protein is G protein-activated inward rectifier potassium channel 3 (Kcnj9).